We begin with the raw amino-acid sequence, 304 residues long: Ornithine carbamoyltransferase (304 aa).

Residues 51–54, glutamine 78, arginine 102, and 129–132 contribute to the carbamoyl phosphate site; these read STRT and HPVQ. L-ornithine is bound by residues asparagine 157, aspartate 221, and 225–226; that span reads SM. Carbamoyl phosphate is bound by residues 261–262 and arginine 289; that span reads CL.

Belongs to the aspartate/ornithine carbamoyltransferase superfamily. OTCase family.

It is found in the cytoplasm. It carries out the reaction carbamoyl phosphate + L-ornithine = L-citrulline + phosphate + H(+). It participates in amino-acid degradation; L-arginine degradation via ADI pathway; carbamoyl phosphate from L-arginine: step 2/2. Its function is as follows. Reversibly catalyzes the transfer of the carbamoyl group from carbamoyl phosphate (CP) to the N(epsilon) atom of ornithine (ORN) to produce L-citrulline. The sequence is that of Ornithine carbamoyltransferase from Campylobacter curvus (strain 525.92).